We begin with the raw amino-acid sequence, 148 residues long: Sporulation inhibitor of replication protein SirA (148 aa).

It belongs to the SirA family. In terms of assembly, interacts with DnaA. Forms a 1:1 complex with domain I of DnaA.

The protein localises to the cytoplasm. Functionally, inhibits DNA replication initiation during sporulation, preventing overinitiation and thus enforcing diploidy; probably the main regulator of sporulation replication initiation under Spo0A control. During sporulation SirA prevents DnaA association with the replication origin to prevent excessive chromosome replication. Alternatively SirA binds to domain I of DnaA and prevent its interaction with DnaD, preventing DNA replication initiation. Upon ectopic expression during vegetative growth reduces chromosome copy number, leading to elongated cells with that can have a single nucleoid or be anucleate. Ectopic expression during vegetative growth blocks DnaA at oriC while blocking recruitment of DnaD to oriC. Plays a significant role during the onset of sporulation. The chain is Sporulation inhibitor of replication protein SirA from Bacillus subtilis (strain 168).